Here is a 537-residue protein sequence, read N- to C-terminus: MSGQQRGSVILVPEHLAGALTKLMSDFITGQDVTLSGGNIAVKIRDAINQTPGGGDVAILSSLFALWNALPTSGRQSSRDDLIPAAVQALTTAHNLCLGVIPGETSHKDTPESLLRAIVTGLQKLWVDSCGCPECLQCLKGLKAIKPGLYEIPRIIPHTKQCSPVNLLNMLVHKLVALRGHVQLAYDARVLTPDFHEIPDLDDSDAVFARTLLAALFHLNMFFILKDYITQDSMSLKQALSGHWMSATGNPLPAAPETLRDYLEAFRNSDNHFYLPTTGPLNTFQFPEELLGRVVVIDSSLCAASHVQDVITHGVGAGVPRPRFSALPPAPSREPQQTCSQLTSRGNESSRRNLGQPGGTSPAVPPVCPIVSLTASGAKQNRGGMGSLHLAKPEETSPAVSPVCPIASPAASRSKQHCGVTGSSQAAPSFSSVAPVASLSGDLEEEEEGSRESPSLPSSKKGDEEFEAWLEAQDANLEDVQREFSGLRVIGDEDEDGSEDGEFSDLDLSDSDHEGDEGGGAVGGGRSLHSLYSLSVV.

Disordered stretches follow at residues 321 to 366, 378 to 398, 414 to 466, and 486 to 537; these read RPRF…AVPP, AKQNRGGMGSLHLAKPEETSP, SKQH…DEEF, and GLRV…LSVV. The span at 334–347 shows a compositional bias: polar residues; the sequence is EPQQTCSQLTSRGN. Low complexity predominate over residues 423-441; sequence SSQAAPSFSSVAPVASLSG. A compositionally biased stretch (acidic residues) spans 492-517; it reads DEDEDGSEDGEFSDLDLSDSDHEGDE.

Belongs to the lymphocryptovirus BRRF2 family.

The protein resides in the virion tegument. The chain is Tegument protein BRRF2 from Homo sapiens (Human).